The primary structure comprises 47 residues: Photosystem II reaction center protein K (47 aa).

The propeptide occupies Met1–Ala10. The helical transmembrane segment at Leu26–Phe46 threads the bilayer.

Belongs to the PsbK family. PSII is composed of 1 copy each of membrane proteins PsbA, PsbB, PsbC, PsbD, PsbE, PsbF, PsbH, PsbI, PsbJ, PsbK, PsbL, PsbM, PsbT, PsbX, PsbY, Psb30/Ycf12, peripheral proteins PsbO, CyanoQ (PsbQ), PsbU, PsbV and a large number of cofactors. It forms dimeric complexes.

Its subcellular location is the cellular thylakoid membrane. One of the components of the core complex of photosystem II (PSII). PSII is a light-driven water:plastoquinone oxidoreductase that uses light energy to abstract electrons from H(2)O, generating O(2) and a proton gradient subsequently used for ATP formation. It consists of a core antenna complex that captures photons, and an electron transfer chain that converts photonic excitation into a charge separation. The protein is Photosystem II reaction center protein K of Prochlorococcus marinus (strain NATL2A).